The primary structure comprises 438 residues: GTPase Der (438 aa).

2 consecutive EngA-type G domains span residues 3 to 168 (PLIA…PCPE) and 179 to 354 (IKLA…INRR). GTP-binding positions include 9 to 16 (GRPNVGKS), 56 to 60 (DTGGY), 120 to 123 (NKVD), 185 to 192 (GRPNVGKS), 232 to 236 (DTAGL), and 297 to 300 (NKWD). Positions 355 to 438 (QKISTSNLNR…LPITMRFLRK (84 aa)) constitute a KH-like domain.

The protein belongs to the TRAFAC class TrmE-Era-EngA-EngB-Septin-like GTPase superfamily. EngA (Der) GTPase family. As to quaternary structure, associates with the 50S ribosomal subunit.

GTPase that plays an essential role in the late steps of ribosome biogenesis. In Chlorobaculum parvum (strain DSM 263 / NCIMB 8327) (Chlorobium vibrioforme subsp. thiosulfatophilum), this protein is GTPase Der.